The following is a 186-amino-acid chain: Nicotinamidase/pyrazinamidase (186 aa).

D8 acts as the Proton acceptor in catalysis. Fe cation is bound by residues D49, H51, H57, and H71. K96 is an active-site residue. Catalysis depends on C138, which acts as the Nucleophile.

It belongs to the isochorismatase family. As to quaternary structure, monomer. It depends on Mn(2+) as a cofactor. Fe(2+) serves as cofactor.

The catalysed reaction is nicotinamide + H2O = nicotinate + NH4(+). It carries out the reaction pyrazinamide + H2O = pyrazine-2-carboxylate + NH4(+). The protein operates within cofactor biosynthesis; nicotinate biosynthesis; nicotinate from nicotinamide: step 1/1. Is inhibited by Cu(2+), Zn(2+) and Fe(3+). Its function is as follows. Catalyzes the deamidation of nicotinamide (NAM) into nicotinate. Likely functions in the cyclical salvage pathway for production of NAD from nicotinamide. In terms of biological role, is involved in the activation of the first-line antituberculous drug pyrazinamide (PZA) by converting it into the active form, pyrazinoic acid. In Mycobacterium tuberculosis (strain ATCC 25618 / H37Rv), this protein is Nicotinamidase/pyrazinamidase.